The sequence spans 271 residues: Shikimate dehydrogenase (NADP(+)) (271 aa).

Residues 15–17 (SKS) and Thr-62 contribute to the shikimate site. The active-site Proton acceptor is the Lys-66. Glu-78 contacts NADP(+). Positions 87 and 103 each coordinate shikimate. NADP(+)-binding positions include 127–131 (GAGGA), 151–156 (NRTQAK), and Met-214. A shikimate-binding site is contributed by Tyr-216. Residue Gly-238 coordinates NADP(+).

The protein belongs to the shikimate dehydrogenase family. As to quaternary structure, homodimer.

The enzyme catalyses shikimate + NADP(+) = 3-dehydroshikimate + NADPH + H(+). Its pathway is metabolic intermediate biosynthesis; chorismate biosynthesis; chorismate from D-erythrose 4-phosphate and phosphoenolpyruvate: step 4/7. Its function is as follows. Involved in the biosynthesis of the chorismate, which leads to the biosynthesis of aromatic amino acids. Catalyzes the reversible NADPH linked reduction of 3-dehydroshikimate (DHSA) to yield shikimate (SA). This Shewanella pealeana (strain ATCC 700345 / ANG-SQ1) protein is Shikimate dehydrogenase (NADP(+)).